The sequence spans 1068 residues: Disheveled-associated activator of morphogenesis 2 (1068 aa).

The 377-residue stretch at 40–416 folds into the GBD/FH3 domain; the sequence is SPIPNAEELN…QIVLQDERGV (377 aa). Residues 434–516 adopt a coiled-coil conformation; it reads MLINENEVKQ…LVAQLSELST (83 aa). Residues 514–586 are disordered; the sequence is LSTGPVSSPP…MGLPLPQDPY (73 aa). Residues 518–594 enclose the FH1 domain; that stretch reads PVSSPPPPGG…PYPSSDVPLR (77 aa). Residues 540-572 are compositionally biased toward pro residues; that stretch reads LPPPPPPLPFACCPPPPPPPLPPGGPPTPPGAP. Residues 595-994 enclose the FH2 domain; it reads KKRVPQPSHP…EERRARMEAM (400 aa). Ser1015 bears the Phosphoserine mark. One can recognise a DAD domain in the interval 1016–1048; sequence SLEEGGEFDDLVSALRSGEVFDKDLCKLKRSRK.

This sequence belongs to the formin homology family. In terms of assembly, interacts with DVL3. Interacts with INF2. Expressed in most tissues examined. Expressed in kidney glomeruli.

Key regulator of the Wnt signaling pathway, which is required for various processes during development, such as dorsal patterning, determination of left/right symmetry or myelination in the central nervous system. Acts downstream of Wnt ligands and upstream of beta-catenin (CTNNB1). Required for canonical Wnt signaling pathway during patterning in the dorsal spinal cord by promoting the aggregation of Disheveled (Dvl) complexes, thereby clustering and formation of Wnt receptor signalosomes and potentiating Wnt activity. During dorsal patterning of the spinal cord, inhibits oligodendrocytes differentiation via interaction with PIP5K1A. Also regulates non-canonical Wnt signaling pathway. Acts downstream of PITX2 in the developing gut and is required for left/right asymmetry within dorsal mesentery: affects mesenchymal condensation by lengthening cadherin-based junctions through WNT5A and non-canonical Wnt signaling, inducing polarized condensation in the left dorsal mesentery necessary to initiate gut rotation. Together with DAAM1, required for myocardial maturation and sarcomere assembly. Is a regulator of actin nucleation and elongation, filopodia formation and podocyte migration. This is Disheveled-associated activator of morphogenesis 2 from Homo sapiens (Human).